Reading from the N-terminus, the 565-residue chain is NAD-dependent malic enzyme (565 aa).

The active-site Proton donor is the Tyr104. Residue Arg157 participates in NAD(+) binding. Lys175 (proton acceptor) is an active-site residue. Positions 246, 247, and 270 each coordinate a divalent metal cation. The NAD(+) site is built by Asp270 and Asn418.

The protein belongs to the malic enzymes family. In terms of assembly, homotetramer. Mg(2+) is required as a cofactor. Requires Mn(2+) as cofactor.

It catalyses the reaction (S)-malate + NAD(+) = pyruvate + CO2 + NADH. The enzyme catalyses oxaloacetate + H(+) = pyruvate + CO2. The sequence is that of NAD-dependent malic enzyme from Shigella flexneri serotype 5b (strain 8401).